The primary structure comprises 426 residues: Synaptotagmin-13 (426 aa).

The Vesicular segment spans residues 1–6; the sequence is MVLSVP. The helical transmembrane segment at 7 to 29 threads the bilayer; that stretch reads VIALGATLGTATSILALCGVTCL. At 30 to 426 the chain is on the cytoplasmic side; that stretch reads CRHMHPKKGL…QIAMWHQLHL (397 aa). C2 domains lie at 158–275 and 287–422; these read QAPK…AQWG and GTGE…AMWH.

This sequence belongs to the synaptotagmin family. Interacts with NRXN1. In terms of tissue distribution, expressed in brain, spleen, kidney and testis.

It localises to the membrane. Functionally, may be involved in transport vesicle docking to the plasma membrane. In Rattus norvegicus (Rat), this protein is Synaptotagmin-13 (Syt13).